The chain runs to 1153 residues: Nitric oxide synthase (1153 aa).

A (6R)-L-erythro-5,6,7,8-tetrahydrobiopterin-binding site is contributed by serine 3. Cysteine 82 serves as a coordination point for heme b. L-arginine-binding residues include glutamine 145, tryptophan 254, and asparagine 264. Phenylalanine 358 contacts (6R)-L-erythro-5,6,7,8-tetrahydrobiopterin. Residues 397–417 (PKRKLGFKALARAVEFSASLM) are calmodulin-binding. The 184-residue stretch at 427–610 (CSIFYATETG…SFRAWSEEVF (184 aa)) folds into the Flavodoxin-like domain. An FMN-binding site is contributed by 556–587 (VFGLGSKAYPYYAAYGKYIYLMLQELGAERLV). One can recognise an FAD-binding FR-type domain in the interval 660 to 903 (KEVMPLILAE…LRSAPHFHLP (244 aa)). FAD-binding positions include 697 to 708 (YAPGDHVAIFPA) and 836 to 846 (LQPRYYSISSS). NADP(+) is bound at residue 911-929 (IMIGPGSGIAPFRSFWQQR). A run of 11 repeats spans residues 934-940 (ENTMPSC), 941-947 (ENTMLSC), 948-954 (ETTIPSC), 955-961 (ENSMPSC), 962-968 (ENTMPSC), 969-975 (ENTMPSC), 976-982 (ENTIPSC), 983-989 (ENTIPSC), 990-996 (ENTMPSC), 997-1003 (ENTIPSW), and 1004-1010 (ERTMQPC). Residues 934 to 1010 (ENTMPSCENT…PSWERTMQPC (77 aa)) form an 11 X 7 AA tandem repeats of E-[NTR]-[ST]-[IM]-[PLQ]-[SP]-[CW] region. 1089 to 1104 (GGHFYVSGDVSMAHDV) provides a ligand contact to NADP(+).

The protein belongs to the NOS family. Heme b serves as cofactor. FAD is required as a cofactor. The cofactor is FMN. As to expression, expressed in the central nervous system, in the serotonergic cerebral giant cells. The isoform Long and isoform Short are expressed equally in the CNS.

It catalyses the reaction 2 L-arginine + 3 NADPH + 4 O2 + H(+) = 2 L-citrulline + 2 nitric oxide + 3 NADP(+) + 4 H2O. Its activity is regulated as follows. Stimulated by calcium/calmodulin. Produces nitric oxide (NO) which is a messenger molecule with diverse functions throughout the body. The polypeptide is Nitric oxide synthase (NOS) (Lymnaea stagnalis (Great pond snail)).